A 285-amino-acid chain; its full sequence is Small ribosomal subunit protein uS5x (285 aa).

A compositionally biased stretch (basic and acidic residues) spans 1 to 19; the sequence is MAERGGERGVERGGERGDF. Residues 1–51 form a disordered region; the sequence is MAERGGERGVERGGERGDFGRGFGGRGGRGDRGGRGRGGRGGRRGGRASEE. Residues 35 to 46 are compositionally biased toward basic residues; sequence RGRGGRGGRRGG. Residues 96–159 enclose the S5 DRBM domain; it reads LKDEVMKIMP…ILAKLSVVPV (64 aa).

It belongs to the universal ribosomal protein uS5 family. Interacts with MBD6.

Component of the ribosome, a large ribonucleoprotein complex responsible for the synthesis of proteins in the cell. The small ribosomal subunit (SSU) binds messenger RNAs (mRNAs) and translates the encoded message by selecting cognate aminoacyl-transfer RNA (tRNA) molecules. The large subunit (LSU) contains the ribosomal catalytic site termed the peptidyl transferase center (PTC), which catalyzes the formation of peptide bonds, thereby polymerizing the amino acids delivered by tRNAs into a polypeptide chain. The nascent polypeptides leave the ribosome through a tunnel in the LSU and interact with protein factors that function in enzymatic processing, targeting, and the membrane insertion of nascent chains at the exit of the ribosomal tunnel. Plays a role in the assembly and function of the 40S ribosomal subunit. Mutations in this protein affects the control of translational fidelity. Involved in nucleolar processing of pre-18S ribosomal RNA and ribosome assembly. Also involved in RNA-directed DNA methylation (RdDM). This is Small ribosomal subunit protein uS5x from Arabidopsis thaliana (Mouse-ear cress).